The chain runs to 123 residues: MAGGSGNSDEELLRAVRIIKILYQSNPYPSPEGSRQARRNRRRRWRARQRQINSLSERILSTCLERPTGPVSLPLPPIERLTLDSAEDIGTGGTDPPQGTETGTGSPNTPEGHSTILGTGAKN.

Serine 5 and serine 8 each carry phosphoserine; by host CK2. The segment at 18–26 (IIKILYQSN) is homomultimerization. Disordered stretches follow at residues 24–49 (QSNP…RARQ) and 82–123 (TLDS…GAKN). A Nuclear localization signal and RNA-binding (RRE) motif is present at residues 34–50 (SRQARRNRRRRWRARQR). The span at 36-49 (QARRNRRRRWRARQ) shows a compositional bias: basic residues. The Nuclear export signal and binding to XPO1 motif lies at 73–84 (LPLPPIERLTLD). Over residues 97–112 (PQGTETGTGSPNTPEG) the composition is skewed to polar residues.

The protein belongs to the HIV-1 REV protein family. As to quaternary structure, homomultimer; when bound to the RRE. Multimeric assembly is essential for activity and may involve XPO1. Binds to human KPNB1, XPO1, TNPO1, RANBP5 and IPO7. Interacts with the viral Integrase. Interacts with human KHDRBS1. Interacts with human NAP1; this interaction decreases Rev multimerization and stimulates its activity. Interacts with human DEAD-box helicases DDX3 and DDX24; these interactions may serve for viral RNA export to the cytoplasm and packaging, respectively. Interacts with human PSIP1; this interaction may inhibit HIV-1 DNA integration by promoting dissociation of the Integrase-LEDGF/p75 complex. Asymmetrically arginine dimethylated at one site by host PRMT6. Methylation impairs the RNA-binding activity and export of viral RNA from the nucleus to the cytoplasm. Post-translationally, phosphorylated by protein kinase CK2. Presence of, and maybe binding to the N-terminus of the regulatory beta subunit of CK2 is necessary for CK2-mediated Rev's phosphorylation.

The protein resides in the host nucleus. It localises to the host nucleolus. The protein localises to the host cytoplasm. Functionally, escorts unspliced or incompletely spliced viral pre-mRNAs (late transcripts) out of the nucleus of infected cells. These pre-mRNAs carry a recognition sequence called Rev responsive element (RRE) located in the env gene, that is not present in fully spliced viral mRNAs (early transcripts). This function is essential since most viral proteins are translated from unspliced or partially spliced pre-mRNAs which cannot exit the nucleus by the pathway used by fully processed cellular mRNAs. Rev itself is translated from a fully spliced mRNA that readily exits the nucleus. Rev's nuclear localization signal (NLS) binds directly to KPNB1/Importin beta-1 without previous binding to KPNA1/Importin alpha-1. KPNB1 binds to the GDP bound form of RAN (Ran-GDP) and targets Rev to the nucleus. In the nucleus, the conversion from Ran-GDP to Ran-GTP dissociates Rev from KPNB1 and allows Rev's binding to the RRE in viral pre-mRNAs. Rev multimerization on the RRE via cooperative assembly exposes its nuclear export signal (NES) to the surface. Rev can then form a complex with XPO1/CRM1 and Ran-GTP, leading to nuclear export of the complex. Conversion from Ran-GTP to Ran-GDP mediates dissociation of the Rev/RRE/XPO1/RAN complex, so that Rev can return to the nucleus for a subsequent round of export. Beside KPNB1, also seems to interact with TNPO1/Transportin-1, RANBP5/IPO5 and IPO7/RANBP7 for nuclear import. The nucleoporin-like HRB/RIP is an essential cofactor that probably indirectly interacts with Rev to release HIV RNAs from the perinuclear region to the cytoplasm. In Simian immunodeficiency virus (isolate MB66) (SIV-cpz), this protein is Protein Rev.